The sequence spans 62 residues: 6.7 kDa chloroplast outer envelope membrane protein (62 aa).

The Chloroplast intermembrane segment spans residues 1–17 (MESVAKPATTKEGSAKQ). A helical membrane pass occupies residues 18–40 (AAIVVGVLALGWFAIQVAFIPLF). Topologically, residues 41-62 (NKVRGGGSDKKDDDVNAFTPDT) are cytoplasmic.

It is found in the plastid. The protein localises to the chloroplast outer membrane. The protein is 6.7 kDa chloroplast outer envelope membrane protein of Spinacia oleracea (Spinach).